The following is a 350-amino-acid chain: D-alanine--D-alanine ligase (350 aa).

The ATP-grasp domain occupies 138-346 (KSAFSSAGLS…LEQLVHKLIQ (209 aa)). ATP is bound at residue 173–228 (ERELNYPCFVKPANLGSSVGISKVRSRQELEAGLEQAAALDPRLVVEQGVNAREVE). Positions 299, 313, and 315 each coordinate Mg(2+).

Belongs to the D-alanine--D-alanine ligase family. Mg(2+) is required as a cofactor. The cofactor is Mn(2+).

It localises to the cytoplasm. The catalysed reaction is 2 D-alanine + ATP = D-alanyl-D-alanine + ADP + phosphate + H(+). It functions in the pathway cell wall biogenesis; peptidoglycan biosynthesis. Functionally, cell wall formation. The chain is D-alanine--D-alanine ligase from Synechococcus sp. (strain CC9605).